The chain runs to 425 residues: Histidine--tRNA ligase (425 aa).

The protein belongs to the class-II aminoacyl-tRNA synthetase family. In terms of assembly, homodimer.

It localises to the cytoplasm. It catalyses the reaction tRNA(His) + L-histidine + ATP = L-histidyl-tRNA(His) + AMP + diphosphate + H(+). This Chlorobium chlorochromatii (strain CaD3) protein is Histidine--tRNA ligase.